The primary structure comprises 538 residues: MARGSGAGGGGGGGGGGLELSVGVGGGGGARGGGGGEAAAAVETAAPISLGRLILSGMVAGGVQYGWALQLSLLTPYVQTLGLSHALTSFMWLCGPIAGMVVQPCVGLYSDRCTSKWGRRRPYILTGCVLICLAVVVIGFSADIGYAMGDTKEDCSVYHGSRWHAAIVYVLGFWLLDFSNNTVQGPARALMADLSGRHGPGTANSIFCSWMAMGNILGYSSGSTNNWHKWFPFLKTRACCEACANLKGAFLVAVIFLSLCLVITLIFAKEVPFKGNAALPTKSNEPAEPEGTGPLAVLKGFRNLPTGMPSVLIVTGLTWLSWFPFILYDTDWMGREIYHGDPKGTDPQIEAFNQGVRAGAFGLLLNSIVLGFSSFLIEPMCRKVGPRVVWVTSNFLVCIAMAATALISFWSLKDFHGTVQKAITADKSIKAVCLVLFAFLGVPLAVLYSVPFAVTAQLAATRGGGQGLCTGVLNISIVIPQVVIALGAGPWDELFGKGNIPAFGLASGFALIGGVAGIFLLPKISKRQFRSVSMGGGH.

Residues 1-52 are Cytoplasmic-facing; the sequence is MARGSGAGGGGGGGGGGLELSVGVGGGGGARGGGGGEAAAAVETAAPISLGR. A helical membrane pass occupies residues 53-73; it reads LILSGMVAGGVQYGWALQLSL. Residues 74-81 lie on the Extracellular side of the membrane; the sequence is LTPYVQTL. Residues 82-102 traverse the membrane as a helical segment; the sequence is GLSHALTSFMWLCGPIAGMVV. Over 103 to 123 the chain is Cytoplasmic; that stretch reads QPCVGLYSDRCTSKWGRRRPY. The chain crosses the membrane as a helical span at residues 124 to 144; the sequence is ILTGCVLICLAVVVIGFSADI. Residues 145 to 162 lie on the Extracellular side of the membrane; it reads GYAMGDTKEDCSVYHGSR. The helical transmembrane segment at 163-183 threads the bilayer; that stretch reads WHAAIVYVLGFWLLDFSNNTV. At 184–198 the chain is on the cytoplasmic side; it reads QGPARALMADLSGRH. Residues 199-219 form a helical membrane-spanning segment; it reads GPGTANSIFCSWMAMGNILGY. At 220 to 247 the chain is on the extracellular side; sequence SSGSTNNWHKWFPFLKTRACCEACANLK. A helical membrane pass occupies residues 248 to 268; that stretch reads GAFLVAVIFLSLCLVITLIFA. Topologically, residues 269 to 306 are cytoplasmic; the sequence is KEVPFKGNAALPTKSNEPAEPEGTGPLAVLKGFRNLPT. Residues 307-327 form a helical membrane-spanning segment; sequence GMPSVLIVTGLTWLSWFPFIL. Over 328–357 the chain is Extracellular; the sequence is YDTDWMGREIYHGDPKGTDPQIEAFNQGVR. A helical membrane pass occupies residues 358–378; the sequence is AGAFGLLLNSIVLGFSSFLIE. The Cytoplasmic portion of the chain corresponds to 379–388; the sequence is PMCRKVGPRV. The chain crosses the membrane as a helical span at residues 389 to 409; sequence VWVTSNFLVCIAMAATALISF. Topologically, residues 410–433 are extracellular; the sequence is WSLKDFHGTVQKAITADKSIKAVC. A helical transmembrane segment spans residues 434 to 454; it reads LVLFAFLGVPLAVLYSVPFAV. Residues 455–470 lie on the Cytoplasmic side of the membrane; it reads TAQLAATRGGGQGLCT. A helical transmembrane segment spans residues 471–491; it reads GVLNISIVIPQVVIALGAGPW. Residues 492-499 lie on the Extracellular side of the membrane; the sequence is DELFGKGN. A helical membrane pass occupies residues 500 to 520; that stretch reads IPAFGLASGFALIGGVAGIFL. At 521-538 the chain is on the cytoplasmic side; it reads LPKISKRQFRSVSMGGGH.

This sequence belongs to the glycoside-pentoside-hexuronide (GPH) cation symporter transporter (TC 2.A.2.4) family. As to quaternary structure, homodimer.

The protein localises to the cell membrane. It functions in the pathway glycan biosynthesis; sucrose metabolism. In terms of biological role, responsible for the transport of sucrose into the cell, with the concomitant uptake of protons (symport system). May also transport other glucosides. May be required for apoplastic phloem sucrose loading in source tissues (e.g. leaves) in order to transport it to sink tissues (e.g. roots, flowers). The chain is Sucrose transport protein SUT1 (SUT1) from Oryza sativa subsp. indica (Rice).